Here is a 154-residue protein sequence, read N- to C-terminus: Ribosome maturation factor RimP (154 aa).

This sequence belongs to the RimP family.

It is found in the cytoplasm. Required for maturation of 30S ribosomal subunits. This chain is Ribosome maturation factor RimP, found in Clostridium perfringens (strain SM101 / Type A).